A 105-amino-acid chain; its full sequence is ATP synthase subunit c (105 aa).

Helical transmembrane passes span 37–57 and 82–102; these read IGAG…GYIF and SAIS…LIFV.

Belongs to the ATPase C chain family. F-type ATPases have 2 components, F(1) - the catalytic core - and F(0) - the membrane proton channel. F(1) has five subunits: alpha(3), beta(3), gamma(1), delta(1), epsilon(1). F(0) has three main subunits: a(1), b(2) and c(10-14). The alpha and beta chains form an alternating ring which encloses part of the gamma chain. F(1) is attached to F(0) by a central stalk formed by the gamma and epsilon chains, while a peripheral stalk is formed by the delta and b chains.

The protein localises to the cell membrane. F(1)F(0) ATP synthase produces ATP from ADP in the presence of a proton or sodium gradient. F-type ATPases consist of two structural domains, F(1) containing the extramembraneous catalytic core and F(0) containing the membrane proton channel, linked together by a central stalk and a peripheral stalk. During catalysis, ATP synthesis in the catalytic domain of F(1) is coupled via a rotary mechanism of the central stalk subunits to proton translocation. In terms of biological role, key component of the F(0) channel; it plays a direct role in translocation across the membrane. A homomeric c-ring of between 10-14 subunits forms the central stalk rotor element with the F(1) delta and epsilon subunits. This Mycoplasma pneumoniae (strain ATCC 29342 / M129 / Subtype 1) (Mycoplasmoides pneumoniae) protein is ATP synthase subunit c.